The following is a 402-amino-acid chain: Phosphoglycerate kinase (402 aa).

Substrate-binding positions include 24–26 (DFN), Arg-40, 63–66 (HFGR), Arg-122, and Arg-155. Residues Lys-206, Gly-297, Glu-328, and 357 to 360 (GGDS) each bind ATP.

It belongs to the phosphoglycerate kinase family. As to quaternary structure, monomer.

Its subcellular location is the cytoplasm. It carries out the reaction (2R)-3-phosphoglycerate + ATP = (2R)-3-phospho-glyceroyl phosphate + ADP. It functions in the pathway carbohydrate degradation; glycolysis; pyruvate from D-glyceraldehyde 3-phosphate: step 2/5. This Prochlorococcus marinus (strain SARG / CCMP1375 / SS120) protein is Phosphoglycerate kinase.